The primary structure comprises 499 residues: ATP synthase subunit alpha (499 aa).

169 to 176 (GDRGTGKT) contacts ATP.

Belongs to the ATPase alpha/beta chains family. F-type ATPases have 2 components, CF(1) - the catalytic core - and CF(0) - the membrane proton channel. CF(1) has five subunits: alpha(3), beta(3), gamma(1), delta(1), epsilon(1). CF(0) has three main subunits: a(1), b(2) and c(9-12). The alpha and beta chains form an alternating ring which encloses part of the gamma chain. CF(1) is attached to CF(0) by a central stalk formed by the gamma and epsilon chains, while a peripheral stalk is formed by the delta and b chains.

The protein resides in the cell inner membrane. The catalysed reaction is ATP + H2O + 4 H(+)(in) = ADP + phosphate + 5 H(+)(out). Produces ATP from ADP in the presence of a proton gradient across the membrane. The alpha chain is a regulatory subunit. The sequence is that of ATP synthase subunit alpha from Brachyspira hyodysenteriae (strain ATCC 49526 / WA1).